We begin with the raw amino-acid sequence, 433 residues long: Zinc finger protein CONSTANS-LIKE 15 (433 aa).

Zn(2+)-binding residues include cysteine 9, cysteine 12, cysteine 32, histidine 37, cysteine 52, cysteine 55, cysteine 75, and histidine 80. Residues cysteine 9–isoleucine 51 form a B box-type 1; atypical zinc finger. A B box-type 2; atypical zinc finger spans residues cysteine 52 to valine 94. The interval aspartate 319–serine 353 is disordered. A compositionally biased stretch (polar residues) spans serine 324–proline 340. Residues threonine 374–threonine 398 are a coiled coil. One can recognise a CCT domain in the interval arginine 385–alanine 427.

The protein belongs to the CONSTANS family.

The protein localises to the nucleus. The protein is Zinc finger protein CONSTANS-LIKE 15 (COL15) of Arabidopsis thaliana (Mouse-ear cress).